We begin with the raw amino-acid sequence, 111 residues long: Large ribosomal subunit protein uL22 (111 aa).

Belongs to the universal ribosomal protein uL22 family. In terms of assembly, part of the 50S ribosomal subunit.

This protein binds specifically to 23S rRNA; its binding is stimulated by other ribosomal proteins, e.g. L4, L17, and L20. It is important during the early stages of 50S assembly. It makes multiple contacts with different domains of the 23S rRNA in the assembled 50S subunit and ribosome. In terms of biological role, the globular domain of the protein is located near the polypeptide exit tunnel on the outside of the subunit, while an extended beta-hairpin is found that lines the wall of the exit tunnel in the center of the 70S ribosome. This chain is Large ribosomal subunit protein uL22, found in Legionella pneumophila (strain Lens).